The chain runs to 203 residues: Cold-regulated 413 plasma membrane protein 2 (203 aa).

At 1 to 43 (MGRMDYLAMKTDDVDTVALVNSDMEELKVAAKKLFSDVSKLGG) the chain is on the extracellular side. Residues 44-64 (LGFGVSFLKFLASFAAIYLLI) form a helical membrane-spanning segment. Topologically, residues 65–74 (LDRTNWKTKM) are cytoplasmic. Residues 75-95 (LTSLLIPYIFLSLPSVIFNFL) traverse the membrane as a helical segment. Residues 96-98 (SGD) lie on the Extracellular side of the membrane. Residues 99-119 (VGKWIAFVAVVLRLFFPKHFP) form a helical membrane-spanning segment. A topological domain (cytoplasmic) is located at residue Asp120. Residues 121–141 (WLEMPGSLILLLVVSPHFLAH) form a helical membrane-spanning segment. Residues 142-144 (HIR) lie on the Extracellular side of the membrane. A helical transmembrane segment spans residues 145 to 165 (GTWIGTVISLFIGCYLLQEHI). The Cytoplasmic portion of the chain corresponds to 166–179 (RASGGFRNSFTQPR). Residues 180 to 200 (GVSNTLGIILLLVYPVWALIV) form a helical membrane-spanning segment. At 201–203 (RVM) the chain is on the extracellular side.

This sequence belongs to the Cold-regulated 413 protein family.

The protein localises to the cell membrane. This chain is Cold-regulated 413 plasma membrane protein 2 (COR413PM2), found in Arabidopsis thaliana (Mouse-ear cress).